Reading from the N-terminus, the 566-residue chain is DNA ligase B (566 aa).

The N6-AMP-lysine intermediate role is filled by lysine 125.

Belongs to the NAD-dependent DNA ligase family. LigB subfamily.

The enzyme catalyses NAD(+) + (deoxyribonucleotide)n-3'-hydroxyl + 5'-phospho-(deoxyribonucleotide)m = (deoxyribonucleotide)n+m + AMP + beta-nicotinamide D-nucleotide.. Its function is as follows. Catalyzes the formation of phosphodiester linkages between 5'-phosphoryl and 3'-hydroxyl groups in double-stranded DNA using NAD as a coenzyme and as the energy source for the reaction. In Pseudomonas putida (strain ATCC 700007 / DSM 6899 / JCM 31910 / BCRC 17059 / LMG 24140 / F1), this protein is DNA ligase B.